An 86-amino-acid chain; its full sequence is Candiduxin-1 (86 aa).

The first 21 residues, 1 to 21, serve as a signal peptide directing secretion; the sequence is MKTLLLTLVVLTIACLDLGYT. 4 cysteine pairs are disulfide-bonded: Cys-24/Cys-45, Cys-38/Cys-62, Cys-66/Cys-78, and Cys-79/Cys-84.

It belongs to the three-finger toxin family. Short-chain subfamily. Orphan group IX sub-subfamily. As to expression, expressed by the venom gland.

The protein localises to the secreted. This Bungarus candidus (Malayan krait) protein is Candiduxin-1.